The sequence spans 456 residues: Glutamate--tRNA ligase 1 (456 aa).

Residues 9–19 carry the 'HIGH' region motif; that stretch reads PSPTGQIHIGN. The 'KMSKS' region motif lies at 250 to 254; the sequence is GLSKR. Lys-253 serves as a coordination point for ATP.

Belongs to the class-I aminoacyl-tRNA synthetase family. Glutamate--tRNA ligase type 1 subfamily. Monomer.

It localises to the cytoplasm. The enzyme catalyses tRNA(Glu) + L-glutamate + ATP = L-glutamyl-tRNA(Glu) + AMP + diphosphate. Functionally, catalyzes the attachment of glutamate to tRNA(Glu) in a two-step reaction: glutamate is first activated by ATP to form Glu-AMP and then transferred to the acceptor end of tRNA(Glu). In Chelativorans sp. (strain BNC1), this protein is Glutamate--tRNA ligase 1.